The sequence spans 428 residues: MSNVVVMGAQWGDEGKGKIVDLLTRKCDVIVRFQGGNNAGHTVLVGDKQYILHLIPSGILHPGKKCLIGNGVVLDPAVFCREVETLRDKDVDVSPARLMISRKAHVIMPYHKALDVARECHKTNESKIGTTGRGIGPCYEDKMSRIGIRAADLAMPELLRAKIEAALLEKNALLAGLYGGETMTVDAVFDEVMAVAPRVVPHLADVTAEIEAAWAAGQHVMFEGAQGTHLDIDHGTYPFVTSSNTVSGNASAGSGIAPTRLDRIVAIVKAYTTRVGAGPFPTEQLNEAGDYLQQKGHEFGATTGRKRRCGWLDAVVLREAVRLNGPTDIALTKLDVLSGLKELKICTAYEYQGGTITVAPQEQNGMAHVTPVYETMPGWDDDITGCTTWESLPAPTRAYIARIEELTGVRVSLVSVGPERDQTINRGW.

Residues 12 to 18 and 40 to 42 contribute to the GTP site; these read GDEGKGK and GHT. The Proton acceptor role is filled by Asp-13. Residues Asp-13 and Gly-40 each coordinate Mg(2+). Residues 13–16, 38–41, Thr-131, Arg-145, Gln-226, Thr-241, and Arg-305 contribute to the IMP site; these read DEGK and NAGH. The active-site Proton donor is His-41. 301–307 is a binding site for substrate; that stretch reads ATTGRKR. Residues Arg-307, 333 to 335, and 415 to 417 each bind GTP; these read KLD and SVG.

Belongs to the adenylosuccinate synthetase family. Homodimer. Requires Mg(2+) as cofactor.

The protein localises to the cytoplasm. The enzyme catalyses IMP + L-aspartate + GTP = N(6)-(1,2-dicarboxyethyl)-AMP + GDP + phosphate + 2 H(+). It participates in purine metabolism; AMP biosynthesis via de novo pathway; AMP from IMP: step 1/2. In terms of biological role, plays an important role in the de novo pathway of purine nucleotide biosynthesis. Catalyzes the first committed step in the biosynthesis of AMP from IMP. This is Adenylosuccinate synthetase from Nitratidesulfovibrio vulgaris (strain DSM 19637 / Miyazaki F) (Desulfovibrio vulgaris).